The sequence spans 224 residues: Holliday junction branch migration complex subunit RuvA (224 aa).

The interval 1 to 67 (MISWLKGEKV…EDGTSLYGFI (67 aa)) is domain I. The interval 68–146 (EVNQRDLFRE…RFTDNDKTIH (79 aa)) is domain II. Residues 147–157 (ENKNDIEANQF) are flexible linker. The tract at residues 157–224 (FSKYIDEIYL…ILMKLSEKST (68 aa)) is domain III.

It belongs to the RuvA family. In terms of assembly, homotetramer. Forms an RuvA(8)-RuvB(12)-Holliday junction (HJ) complex. HJ DNA is sandwiched between 2 RuvA tetramers; dsDNA enters through RuvA and exits via RuvB. An RuvB hexamer assembles on each DNA strand where it exits the tetramer. Each RuvB hexamer is contacted by two RuvA subunits (via domain III) on 2 adjacent RuvB subunits; this complex drives branch migration. In the full resolvosome a probable DNA-RuvA(4)-RuvB(12)-RuvC(2) complex forms which resolves the HJ.

It is found in the cytoplasm. The RuvA-RuvB-RuvC complex processes Holliday junction (HJ) DNA during genetic recombination and DNA repair, while the RuvA-RuvB complex plays an important role in the rescue of blocked DNA replication forks via replication fork reversal (RFR). RuvA specifically binds to HJ cruciform DNA, conferring on it an open structure. The RuvB hexamer acts as an ATP-dependent pump, pulling dsDNA into and through the RuvAB complex. HJ branch migration allows RuvC to scan DNA until it finds its consensus sequence, where it cleaves and resolves the cruciform DNA. The polypeptide is Holliday junction branch migration complex subunit RuvA (Prochlorococcus marinus (strain NATL2A)).